Reading from the N-terminus, the 173-residue chain is Large ribosomal subunit protein uL10 (173 aa).

The protein belongs to the universal ribosomal protein uL10 family. In terms of assembly, part of the ribosomal stalk of the 50S ribosomal subunit. The N-terminus interacts with L11 and the large rRNA to form the base of the stalk. The C-terminus forms an elongated spine to which L12 dimers bind in a sequential fashion forming a multimeric L10(L12)X complex.

Forms part of the ribosomal stalk, playing a central role in the interaction of the ribosome with GTP-bound translation factors. The polypeptide is Large ribosomal subunit protein uL10 (Maridesulfovibrio salexigens (strain ATCC 14822 / DSM 2638 / NCIMB 8403 / VKM B-1763) (Desulfovibrio salexigens)).